The sequence spans 142 residues: Regulator of ribonuclease activity B (142 aa).

The segment at proline 117–arginine 142 is disordered.

The protein belongs to the RraB family. Interacts with the C-terminal region of Rne.

Its subcellular location is the cytoplasm. Functionally, globally modulates RNA abundance by binding to RNase E (Rne) and regulating its endonucleolytic activity. Can modulate Rne action in a substrate-dependent manner by altering the composition of the degradosome. This chain is Regulator of ribonuclease activity B, found in Actinobacillus succinogenes (strain ATCC 55618 / DSM 22257 / CCUG 43843 / 130Z).